A 233-amino-acid polypeptide reads, in one-letter code: Enolase-phosphatase E1 (233 aa).

Mg(2+) contacts are provided by Asp-6 and Glu-8. Substrate-binding positions include 128-129 and Lys-163; that span reads SS. Asp-188 contacts Mg(2+).

It belongs to the HAD-like hydrolase superfamily. MasA/MtnC family. As to quaternary structure, monomer. Requires Mg(2+) as cofactor.

It is found in the cytoplasm. The protein localises to the nucleus. The catalysed reaction is 5-methylsulfanyl-2,3-dioxopentyl phosphate + H2O = 1,2-dihydroxy-5-(methylsulfanyl)pent-1-en-3-one + phosphate. Its pathway is amino-acid biosynthesis; L-methionine biosynthesis via salvage pathway; L-methionine from S-methyl-5-thio-alpha-D-ribose 1-phosphate: step 3/6. The protein operates within amino-acid biosynthesis; L-methionine biosynthesis via salvage pathway; L-methionine from S-methyl-5-thio-alpha-D-ribose 1-phosphate: step 4/6. Its function is as follows. Bifunctional enzyme that catalyzes the enolization of 2,3-diketo-5-methylthiopentyl-1-phosphate (DK-MTP-1-P) into the intermediate 2-hydroxy-3-keto-5-methylthiopentenyl-1-phosphate (HK-MTPenyl-1-P), which is then dephosphorylated to form the acireductone 1,2-dihydroxy-3-keto-5-methylthiopentene (DHK-MTPene). This is Enolase-phosphatase E1 from Yarrowia lipolytica (strain CLIB 122 / E 150) (Yeast).